The chain runs to 97 residues: Large ribosomal subunit protein bL27 (97 aa).

The propeptide occupies 1–12; sequence MLKMNLANLQLF. The disordered stretch occupies residues 14 to 37; it reads HKKGGGSTSNGRDSQAKRLGAKAA.

Belongs to the bacterial ribosomal protein bL27 family. Post-translationally, the N-terminus is cleaved by ribosomal processing cysteine protease Prp.

This Streptococcus uberis (strain ATCC BAA-854 / 0140J) protein is Large ribosomal subunit protein bL27.